Consider the following 109-residue polypeptide: uncharacterized protein (109 aa).

Positions 27-89 form a coiled coil; that stretch reads KEEAHQFRDK…LKRIDELIAV (63 aa).

This is an uncharacterized protein from Streptococcus pneumoniae.